The chain runs to 375 residues: Arsenite methyltransferase (375 aa).

S335 is modified (phosphoserine).

This sequence belongs to the methyltransferase superfamily. Arsenite methyltransferase family.

The protein resides in the cytoplasm. The protein localises to the cytosol. It catalyses the reaction arsenic triglutathione + [thioredoxin]-dithiol + S-adenosyl-L-methionine + 2 H2O = methylarsonous acid + [thioredoxin]-disulfide + 3 glutathione + S-adenosyl-L-homocysteine + H(+). It carries out the reaction arsenic triglutathione + 2 [thioredoxin]-dithiol + 2 S-adenosyl-L-methionine + H2O = dimethylarsinous acid + 2 [thioredoxin]-disulfide + 3 glutathione + 2 S-adenosyl-L-homocysteine + 2 H(+). The catalysed reaction is arsenic triglutathione + 3 [thioredoxin]-dithiol + 3 S-adenosyl-L-methionine = trimethylarsine + 3 [thioredoxin]-disulfide + 3 glutathione + 3 S-adenosyl-L-homocysteine + 3 H(+). Its function is as follows. Catalyzes the transfer of a methyl group from AdoMet to trivalent arsenicals producing methylated and dimethylated arsenicals. It methylates arsenite to form methylarsonate, Me-AsO(3)H(2), which is reduced by methylarsonate reductase to methylarsonite, Me-As(OH)2. Methylarsonite is also a substrate and it is converted into the much less toxic compound dimethylarsinate (cacodylate), Me(2)As(O)-OH. This Homo sapiens (Human) protein is Arsenite methyltransferase (AS3MT).